A 160-amino-acid polypeptide reads, in one-letter code: Transcription elongation factor GreA (160 aa).

Positions 10–37 form a coiled coil; that stretch reads TLDGKAKLENELQELKTVKRKEVVERIK.

Belongs to the GreA/GreB family.

Necessary for efficient RNA polymerase transcription elongation past template-encoded arresting sites. The arresting sites in DNA have the property of trapping a certain fraction of elongating RNA polymerases that pass through, resulting in locked ternary complexes. Cleavage of the nascent transcript by cleavage factors such as GreA or GreB allows the resumption of elongation from the new 3'terminus. GreA releases sequences of 2 to 3 nucleotides. This chain is Transcription elongation factor GreA, found in Listeria innocua serovar 6a (strain ATCC BAA-680 / CLIP 11262).